The following is a 61-amino-acid chain: UPF0434 protein Avin_14770 (61 aa).

Belongs to the UPF0434 family.

The polypeptide is UPF0434 protein Avin_14770 (Azotobacter vinelandii (strain DJ / ATCC BAA-1303)).